The primary structure comprises 306 residues: Meiotically up-regulated gene 73 protein (306 aa).

Transmembrane regions (helical) follow at residues Y28–F48, F59–G79, Y103–V123, I125–A145, W154–L174, F190–L210, and I224–M244.

The protein belongs to the archaeal/bacterial/fungal opsin family.

The protein localises to the membrane. In terms of biological role, has a role in meiosis. This Schizosaccharomyces pombe (strain 972 / ATCC 24843) (Fission yeast) protein is Meiotically up-regulated gene 73 protein (mug73).